The following is a 1047-amino-acid chain: uncharacterized protein (1047 aa).

Residue lysine 17 is modified to N6-acetyllysine. 2 disordered regions span residues 172–208 (PPCSLAPAPSKGQTLDGTFLRGVPAEGSSKDSSGSFS) and 236–283 (RNSK…PQAL). Serine 208 is modified (phosphoserine). Residues 237–254 (NSKQAMSEGPSSPWTQLA) show a composition bias toward polar residues. Over residues 268 to 283 (HYPPPHHPPPHPPQAL) the composition is skewed to pro residues. Phosphoserine occurs at positions 299 and 391. Position 397 is a phosphothreonine (threonine 397). Disordered stretches follow at residues 448–469 (EKLQPRLSEHSGPPIVIRDSPV), 482–504 (ECQSLPQKEGARPPSSPPMPVID), 519–567 (PAPE…LRGS), 668–690 (PSTPTSAPAPTQPAPTPTSGPIG), 714–763 (VAVA…GDSL), 931–1004 (EAGA…TLKA), and 1021–1047 (PTWGHKSSRPDQPSPCPQLLDSQSHHL). Phosphoserine occurs at positions 455, 496, and 497. Low complexity-rich tracts occupy residues 729 to 741 (PARAQAPASARDP) and 751 to 762 (PAPASTSAPGDS). A phosphoserine mark is found at serine 936, serine 956, serine 988, and serine 996. The span at 978 to 996 (AAAGEESCGASPTPATSAS) shows a compositional bias: low complexity.

This is an uncharacterized protein from Homo sapiens (Human).